The chain runs to 144 residues: uncharacterized protein (144 aa).

A run of 4 helical transmembrane segments spans residues 27–47 (VVCA…IPDI), 49–69 (LLPI…LLAL), 83–103 (IVLL…DATV), and 106–126 (ALDM…ILNV).

It is found in the membrane. This is an uncharacterized protein from Saccharomyces cerevisiae (strain ATCC 204508 / S288c) (Baker's yeast).